The following is a 238-amino-acid chain: DNA damage-regulated autophagy modulator protein 1 (238 aa).

6 helical membrane-spanning segments follow: residues 9 to 29 (AFVP…SYVV), 53 to 73 (SGIF…TMYT), 91 to 111 (VFNL…GIVA), 116 to 136 (LAVP…GVVY), 161 to 181 (MVIS…ASLI), and 200 to 220 (VSAI…LTFI).

Belongs to the DRAM/TMEM150 family.

Its subcellular location is the lysosome membrane. Its function is as follows. Lysosomal modulator of autophagy that plays a central role in p53/TP53-mediated apoptosis. Not involved in p73/TP73-mediated autophagy. The sequence is that of DNA damage-regulated autophagy modulator protein 1 (DRAM1) from Homo sapiens (Human).